Reading from the N-terminus, the 250-residue chain is Probable transcriptional regulatory protein Cpha266_0538 (250 aa).

It belongs to the TACO1 family.

Its subcellular location is the cytoplasm. In Chlorobium phaeobacteroides (strain DSM 266 / SMG 266 / 2430), this protein is Probable transcriptional regulatory protein Cpha266_0538.